The primary structure comprises 372 residues: Alanine racemase (372 aa).

K33 functions as the Proton acceptor; specific for D-alanine in the catalytic mechanism. The residue at position 33 (K33) is an N6-(pyridoxal phosphate)lysine. Substrate is bound at residue R131. Y261 (proton acceptor; specific for L-alanine) is an active-site residue. M309 provides a ligand contact to substrate.

It belongs to the alanine racemase family. It depends on pyridoxal 5'-phosphate as a cofactor.

It catalyses the reaction L-alanine = D-alanine. Its pathway is amino-acid biosynthesis; D-alanine biosynthesis; D-alanine from L-alanine: step 1/1. Its function is as follows. Catalyzes the interconversion of L-alanine and D-alanine. May also act on other amino acids. This is Alanine racemase (alr) from Salinispora arenicola (strain CNS-205).